Here is a 1676-residue protein sequence, read N- to C-terminus: Protein TIC 214 (1676 aa).

6 consecutive transmembrane segments (helical) span residues 23-43 (AGPLIILGIYYGFLITLPIAP), 71-91 (GILIAAISGLTVSQLAFFLSI), 96-116 (LYMIWLKPHLLTLLVLPYMFF), 145-165 (AFLDSFLFQALNPVLLPSPVM), 179-199 (VSLFILGTAIGWLGGQIMFVL), and 226-246 (IFPPIVFGLCLAYMGRAPVSF).

Belongs to the TIC214 family. In terms of assembly, part of the Tic complex.

It localises to the plastid. The protein resides in the chloroplast inner membrane. Involved in protein precursor import into chloroplasts. May be part of an intermediate translocation complex acting as a protein-conducting channel at the inner envelope. The polypeptide is Protein TIC 214 (Zygnema circumcarinatum (Green alga)).